The sequence spans 585 residues: Frizzled-10 (585 aa).

Residues 1–24 (MGPAAGNLVRAVLALCWLAEHCAG) form the signal peptide. Topologically, residues 25 to 229 (ISSIDIERPG…DVYWSKDDKQ (205 aa)) are extracellular. An FZ domain is found at 33 to 154 (PGDGRCQPIE…NDPNYLCMEA (122 aa)). 5 cysteine pairs are disulfide-bonded: Cys38–Cys99, Cys46–Cys92, Cys83–Cys121, Cys110–Cys151, and Cys114–Cys138. Residue Asn52 is glycosylated (N-linked (GlcNAc...) asparagine). A disordered region spans residues 155–195 (PNNGSDEPPRGSSMLPPMFRPQRPSTGHDLQQHKDSLSRTS). A glycan (N-linked (GlcNAc...) asparagine) is linked at Asn157. The chain crosses the membrane as a helical span at residues 230-250 (FAVIWIAIWSILCFFSSAFTV). The Cytoplasmic segment spans residues 251-265 (LTFLIDPQRFKYPER). A helical transmembrane segment spans residues 266 to 286 (PIIFLSMCYCVYSVGYIIRLF). Topologically, residues 287–314 (SGAESIACDRDSGQLYVIQEGLESTGCT) are extracellular. A helical membrane pass occupies residues 315–335 (IVFLVLYYFGMASSLWWVILT). The Cytoplasmic portion of the chain corresponds to 336-355 (LTWFLAAGKKWGHEAIEANS). Residues 356-376 (SYFHLAAWAIPAVKTIMILVM) traverse the membrane as a helical segment. Over 377–397 (RRVAGDELTGLCYVGSMDVNA) the chain is Extracellular. A helical transmembrane segment spans residues 398-418 (LTGFVLIPLACYLIIGTSFIL). Topologically, residues 419 to 447 (SGFVALFHIRRVMKTGGENTDKLEKLMVR) are cytoplasmic. Residues 448 to 468 (IGVFSVLYTVPATCVIACYFY) traverse the membrane as a helical segment. Over 469-506 (ERLNMDYWKIVASQQKCKMNNQTKNLDCMMNNSIPAVE) the chain is Extracellular. Residues Asn489 and Asn499 are each glycosylated (N-linked (GlcNAc...) asparagine). Residues 507 to 527 (IFMVKIFMLLVVGITSGMWIW) form a helical membrane-spanning segment. The Cytoplasmic portion of the chain corresponds to 528–585 (TSKTLQSWQNVCSRRLKKRSRRKPASVITSSGIYKKPQHPQKTHLAKYESTLQPPTCV). Residues 530 to 535 (KTLQSW) carry the Lys-Thr-X-X-X-Trp motif, mediates interaction with the PDZ domain of Dvl family members motif. A PDZ-binding motif is present at residues 583-585 (TCV).

It belongs to the G-protein coupled receptor Fz/Smo family. As to quaternary structure, interacts with WNT7A. Expressed in the dorsal ectoderm overlying the developing spinal cord.

The protein resides in the cell membrane. In terms of biological role, receptor for Wnt proteins. Functions in the canonical Wnt/beta-catenin signaling pathway. Activation by WNT7A induces expression of beta-catenin target genes. The canonical Wnt/beta-catenin signaling pathway leads to the activation of disheveled proteins, inhibition of GSK-3 kinase, nuclear accumulation of beta-catenin and activation of Wnt target genes. A second signaling pathway involving PKC and calcium fluxes has been seen for some family members, but it is not yet clear if it represents a distinct pathway or if it can be integrated in the canonical pathway, as PKC seems to be required for Wnt-mediated inactivation of GSK-3 kinase. Both pathways seem to involve interactions with G-proteins. May be involved in transduction and intercellular transmission of polarity information during tissue morphogenesis and/or in differentiated tissues. This is Frizzled-10 (FZD10) from Gallus gallus (Chicken).